The chain runs to 806 residues: Acetyl-CoA decarbonylase/synthase complex subunit alpha 1 (806 aa).

[4Fe-4S] cluster is bound by residues C73, C76, C77, C79, C84, and C94. H117 is a CO binding site. Positions 250, 278, and 323 each coordinate [Ni-4Fe-4S] cluster. 4Fe-4S ferredoxin-type domains follow at residues 407 to 436 (DEQM…IPEA) and 445 to 475 (YSYL…LSVI). C417, C420, C423, C427, C455, C458, C461, and C465 together coordinate [4Fe-4S] cluster. C523, C552, and C587 together coordinate [Ni-4Fe-4S] cluster.

It belongs to the Ni-containing carbon monoxide dehydrogenase family. As to quaternary structure, heterotetramer of two alpha and two epsilon subunits. The ACDS complex is made up of alpha, epsilon, beta, gamma and delta subunits with a probable stoichiometry of (alpha(2)epsilon(2))(4)-beta(8)-(gamma(1)delta(1))(8). Requires [4Fe-4S] cluster as cofactor. The cofactor is [Ni-4Fe-4S] cluster.

The catalysed reaction is CO + 2 oxidized [2Fe-2S]-[ferredoxin] + H2O = 2 reduced [2Fe-2S]-[ferredoxin] + CO2 + 2 H(+). It participates in one-carbon metabolism; methanogenesis from acetate. Part of the ACDS complex that catalyzes the reversible cleavage of acetyl-CoA, allowing growth on acetate as sole source of carbon and energy. The alpha-epsilon subcomponent functions as a carbon monoxide dehydrogenase. This Methanosarcina thermophila protein is Acetyl-CoA decarbonylase/synthase complex subunit alpha 1.